The chain runs to 149 residues: Small ribosomal subunit protein bS6 (149 aa).

Positions 93–149 (VGKHEEGPSAMMQKRDRDDRPRRDGDRPDRGGFGDRGPRPDRGDRDDRPRRPREDRA) are disordered. Over residues 94 to 149 (GKHEEGPSAMMQKRDRDDRPRRDGDRPDRGGFGDRGPRPDRGDRDDRPRRPREDRA) the composition is skewed to basic and acidic residues.

This sequence belongs to the bacterial ribosomal protein bS6 family.

Its function is as follows. Binds together with bS18 to 16S ribosomal RNA. This Rhizobium meliloti (strain 1021) (Ensifer meliloti) protein is Small ribosomal subunit protein bS6.